A 751-amino-acid polypeptide reads, in one-letter code: Nucleoporin NUP37 (751 aa).

One copy of the WD 1 repeat lies at 21-65 (SLGRRIYDVKTYPVQSPQGATILIYGHENGATVVWRGGRRLKPPK). Residues 57–77 (GGRRLKPPKPQTNEKRNGTKP) form a disordered region. Basic and acidic residues predominate over residues 68 to 77 (TNEKRNGTKP). WD repeat units lie at residues 162-209 (TNDV…LTGP), 237-271 (AQAA…KPGT), 282-322 (YLPS…LPSD), and 351-390 (TSRK…PTAA). Positions 419 to 443 (EGTSPLRNPTTQKASSSSSGEFVPM) are disordered. Polar residues predominate over residues 423-438 (PLRNPTTQKASSSSSG). WD repeat units follow at residues 455-492 (AFGG…VLFL) and 494-534 (GADP…RMIR). The segment at 671–692 (IPSTDAGDEETIPATSAPSSQQ) is disordered. Over residues 683–692 (PATSAPSSQQ) the composition is skewed to polar residues. Positions 716–750 (RDVEQELLDIMEIDRELEQLEQARERGRKRVFFEE) form a coiled coil.

As to quaternary structure, the nuclear pore complex (NPC) constitutes the exclusive means of nucleocytoplasmic transport. NPCs allow the passive diffusion of ions and small molecules and the active, nuclear transport receptor-mediated bidirectional transport of macromolecules such as proteins, RNAs, ribonucleoparticles (RNPs), and ribosomal subunits across the nuclear envelope. The 55-60 MDa NPC is composed of at least 28 different subunits: AMO1, ELYS, GLE1, GLE2, MLP1, NDC1, NIC96, NSP1, NUP133, NUP145, NUP152, NUP159, NUP170, NUP188, NUP192, NUP37, NUP49, NUP53, NUP56, NUP57, NUP82, NUP84, NUP85, POM152, POM33, POM34, SEC13 and SEH1. Due to its 8-fold rotational symmetry, all subunits are present with 8 copies or multiples thereof.

The protein resides in the nucleus. It is found in the nuclear pore complex. This Chaetomium thermophilum (strain DSM 1495 / CBS 144.50 / IMI 039719) (Thermochaetoides thermophila) protein is Nucleoporin NUP37 (NUP37).